We begin with the raw amino-acid sequence, 147 residues long: Prefoldin subunit alpha (147 aa).

Belongs to the prefoldin alpha subunit family. In terms of assembly, heterohexamer of two alpha and four beta subunits.

It localises to the cytoplasm. In terms of biological role, molecular chaperone capable of stabilizing a range of proteins. Seems to fulfill an ATP-independent, HSP70-like function in archaeal de novo protein folding. The polypeptide is Prefoldin subunit alpha (Saccharolobus islandicus (strain M.16.27) (Sulfolobus islandicus)).